A 160-amino-acid polypeptide reads, in one-letter code: Cytochrome b6-f complex subunit 4 (160 aa).

Transmembrane regions (helical) follow at residues 36–56 (LLYI…GLAV), 95–115 (LLGV…PFLE), and 131–151 (TVFL…TLPI).

Belongs to the cytochrome b family. PetD subfamily. In terms of assembly, the 4 large subunits of the cytochrome b6-f complex are cytochrome b6, subunit IV (17 kDa polypeptide, petD), cytochrome f and the Rieske protein, while the 4 small subunits are petG, petL, petM and petN. The complex functions as a dimer.

The protein resides in the plastid. The protein localises to the chloroplast thylakoid membrane. In terms of biological role, component of the cytochrome b6-f complex, which mediates electron transfer between photosystem II (PSII) and photosystem I (PSI), cyclic electron flow around PSI, and state transitions. The sequence is that of Cytochrome b6-f complex subunit 4 from Sorghum bicolor (Sorghum).